Here is a 473-residue protein sequence, read N- to C-terminus: Ribulose bisphosphate carboxylase large chain (473 aa).

The propeptide occupies 1–2 (MS). N-acetylproline is present on Pro-3. Position 14 is an N6,N6,N6-trimethyllysine (Lys-14). Substrate-binding residues include Asn-123 and Thr-173. Residue Lys-175 is the Proton acceptor of the active site. Residue Lys-177 participates in substrate binding. Positions 201, 203, and 204 each coordinate Mg(2+). Lys-201 carries the N6-carboxylysine modification. The active-site Proton acceptor is His-294. Arg-295, His-327, and Ser-379 together coordinate substrate.

Belongs to the RuBisCO large chain family. Type I subfamily. As to quaternary structure, heterohexadecamer of 8 large chains and 8 small chains; disulfide-linked. The disulfide link is formed within the large subunit homodimers. It depends on Mg(2+) as a cofactor. In terms of processing, the disulfide bond which can form in the large chain dimeric partners within the hexadecamer appears to be associated with oxidative stress and protein turnover.

Its subcellular location is the plastid. The protein localises to the chloroplast. The enzyme catalyses 2 (2R)-3-phosphoglycerate + 2 H(+) = D-ribulose 1,5-bisphosphate + CO2 + H2O. It catalyses the reaction D-ribulose 1,5-bisphosphate + O2 = 2-phosphoglycolate + (2R)-3-phosphoglycerate + 2 H(+). Its function is as follows. RuBisCO catalyzes two reactions: the carboxylation of D-ribulose 1,5-bisphosphate, the primary event in carbon dioxide fixation, as well as the oxidative fragmentation of the pentose substrate in the photorespiration process. Both reactions occur simultaneously and in competition at the same active site. The polypeptide is Ribulose bisphosphate carboxylase large chain (Monarda didyma (Scarlet bee-balm)).